The following is a 433-amino-acid chain: DNA polymerase processivity factor (433 aa).

The interval 274 to 433 (RGDPFDKNYV…VPNTKKQKCG (160 aa)) is disordered. 3 stretches are compositionally biased toward gly residues: residues 289–298 (SRGGGGGGGS), 325–336 (GLGGLGGGGGGG), and 344–359 (GGGGSGTRKMSSGGGG). Over residues 360-376 (GDHDHGLSSKEKYEQHK) the composition is skewed to basic and acidic residues. Residues 385–398 (GGSGGGGGGGGGGL) show a composition bias toward gly residues. K410 is covalently cross-linked (Glycyl lysine isopeptide (Lys-Gly) (interchain with G-Cter in host SUMO1)). S413, S415, and S418 each carry phosphoserine.

This sequence belongs to the herpesviridae polymerase accessory protein family. Forms homodimers. Interacts with host SMARCB1. Interacts with host NCL/nucleolin; this interaction is important for the organization of proteins within viral replication compartments. Interacts with UL112/UL113; this interaction is necessary for efficient viral DNA replication. Interacts with UL84. Interacts with the uracil DNA glycosylase UL114. Interacts with the DNA polymerase catalytic subunit UL54. Interacts with host IRF3. Interacts with host RELA. Post-translationally, phosphorylated by UL97 on serine residues, phosphorylation seems important for UL44 nuclear entry but does not directly affect its role in replication. In terms of processing, sumoylated. Sumoylation on Lys-410 increases viral DNA replication.

It is found in the virion. Its subcellular location is the host nucleus. Accessory subunit of the DNA polymerase that plays an essential role in viral DNA replication and acts by increasing the processivity of polymerization. Forms dimers that binds to double-stranded DNA and UL54 specifically to stimulates long chain DNA synthesis efficiently. Plays an important role in maintaining the structure of viral replication compartments by interacting with host nucleolin/NUC. In addition, suppresses innate immune responses through effects on host IRF3 and NF-kappa-B. Mechanistically, interfere with the binding of IRF3 and the p65 NF-kappa-B subunit to the promoters of antiviral genes, thereby inhibiting the expression of these genes. This is DNA polymerase processivity factor (UL44) from Homo sapiens (Human).